The primary structure comprises 469 residues: 3-isopropylmalate dehydratase large subunit (469 aa).

[4Fe-4S] cluster-binding residues include Cys-347, Cys-410, and Cys-413.

The protein belongs to the aconitase/IPM isomerase family. LeuC type 1 subfamily. As to quaternary structure, heterodimer of LeuC and LeuD. Requires [4Fe-4S] cluster as cofactor.

It catalyses the reaction (2R,3S)-3-isopropylmalate = (2S)-2-isopropylmalate. It participates in amino-acid biosynthesis; L-leucine biosynthesis; L-leucine from 3-methyl-2-oxobutanoate: step 2/4. Functionally, catalyzes the isomerization between 2-isopropylmalate and 3-isopropylmalate, via the formation of 2-isopropylmaleate. This chain is 3-isopropylmalate dehydratase large subunit, found in Polynucleobacter necessarius subsp. necessarius (strain STIR1).